A 440-amino-acid chain; its full sequence is Acyltransferase Pun1 (440 aa).

Active-site proton acceptor residues include H169 and D384.

This sequence belongs to the plant acyltransferase family.

It catalyses the reaction vanillylamine + (6E)-8-methylnon-6-enoyl-CoA = capsaicin + CoA + H(+). The enzyme catalyses (6E)-8-methylnon-6-enoyl-CoA + 4-hydroxy-3-methoxy-benzenemethanol = capsiate + CoA. Its function is as follows. Involved in the biosynthesis of capsaicinoids and capsinoids natural products, pungent alkaloids synthesized from phenylpropanoid intermediates in the placental tissue of chili pepper fruit acting as repellant on herbivorous mammals and conferring spiciness to hot peppers. Catalyzes the biosynthesis of capsaicin, a pungent component, and of capsiate, a non-pungent component, from vanillylamine and vanillyl alcohol, respectively. Can transfer an acyl from 8-methylnon-6-enoyl-CoA to vanillylamine forming capsaicin and CoA. This is Acyltransferase Pun1 from Capsicum frutescens (Cayenne pepper).